The primary structure comprises 635 residues: Threonine--tRNA ligase (635 aa).

The 61-residue stretch at 1–61 (MIKITLKDGK…HKDSSLEILT (61 aa)) folds into the TGS domain. The tract at residues 242–532 (DHRKLGKELD…LIEQYAGAFP (291 aa)) is catalytic. Zn(2+) is bound by residues Cys333, His384, and His509.

It belongs to the class-II aminoacyl-tRNA synthetase family. As to quaternary structure, homodimer. Requires Zn(2+) as cofactor.

It localises to the cytoplasm. It catalyses the reaction tRNA(Thr) + L-threonine + ATP = L-threonyl-tRNA(Thr) + AMP + diphosphate + H(+). Functionally, catalyzes the attachment of threonine to tRNA(Thr) in a two-step reaction: L-threonine is first activated by ATP to form Thr-AMP and then transferred to the acceptor end of tRNA(Thr). Also edits incorrectly charged L-seryl-tRNA(Thr). The protein is Threonine--tRNA ligase of Clostridium botulinum (strain Loch Maree / Type A3).